Reading from the N-terminus, the 496-residue chain is Cyclin-dependent kinase 16 (496 aa).

Residues 1–97 (MDRMKKIKRQ…TSSDEVQSPV (97 aa)) are disordered. Ser-12 bears the Phosphoserine; by BRSK2 mark. Residues Ser-36, Ser-42, Ser-64, Ser-65, Ser-78, Ser-82, and Ser-89 each carry the phosphoserine modification. Residues 69-78 (IVHEDLKMGS) are compositionally biased toward basic and acidic residues. Over residues 83-93 (DQASATSSDEV) the composition is skewed to polar residues. At Ser-95 the chain carries Phosphoserine; by CDK5. Residues Ser-110, Ser-119, Ser-138, Ser-146, Ser-153, and Ser-155 each carry the phosphoserine modification. One can recognise a Protein kinase domain in the interval 165 to 446 (YIKLDKLGEG…AEDAMKHPFF (282 aa)). Residues 171–179 (LGEGTYATV) and Lys-194 each bind ATP. Position 175 is a phosphothreonine (Thr-175). Residue Asp-286 is the Proton acceptor of the active site. A Phosphothreonine modification is found at Thr-380. 3 positions are modified to phosphoserine: Ser-391, Ser-478, and Ser-480.

It belongs to the protein kinase superfamily. CMGC Ser/Thr protein kinase family. CDC2/CDKX subfamily. Found in a complex containing CABLES1, CDK17 and TDRD7. Interacts with BRSK2. Identified in a complex with NSF, syntaxin-1, synaptotagmin, SYN1, SYP and CDK5R1. Interacts with YWHAH, YWHAQ and YWHAZ. Interacts with CCNY; this interaction increases the CDK16 kinase activity. Interacts with CCNYL1; this interaction mutually increases the stability of CDK16 and CCNYL1 and increases the kinase activity of CDK16. Interacts with NSF. Phosphorylation of CDK16 is essential for the binding of CCNY, but also essential for the regulation of CDK16 kinase activity. Phosphorylation of CDK16 is essential for the binding of CCNYl1, but also essential for the regulation of CDK16 kinase activity. Ser-146 and Ser-153 are the most critical sites for the binding of CCNYL1 and for modulating CDK16 kinase activity. Phosphorylation at Ser-153 inhibits kinase activity. In terms of tissue distribution, detected in pancreas islets (at protein level). Detected in brain and pancreas.

Its subcellular location is the cytoplasm. The protein resides in the cytoplasmic vesicle. The protein localises to the secretory vesicle. It is found in the cell membrane. It localises to the synapse. Its subcellular location is the synaptosome. The catalysed reaction is L-seryl-[protein] + ATP = O-phospho-L-seryl-[protein] + ADP + H(+). The enzyme catalyses L-threonyl-[protein] + ATP = O-phospho-L-threonyl-[protein] + ADP + H(+). Protein kinase that plays a role in vesicle-mediated transport processes and exocytosis. Regulates GH1 release by brain neurons. Phosphorylates NSF, and thereby regulates NSF oligomerization. Required for normal spermatogenesis. Regulates neuron differentiation and dendrite development. Plays a role in the regulation of insulin secretion in response to changes in blood glucose levels. Can phosphorylate CCNY at 'Ser-336' (in vitro). This is Cyclin-dependent kinase 16 (CDK16) from Homo sapiens (Human).